A 265-amino-acid chain; its full sequence is Urease accessory protein UreH (265 aa).

It belongs to the UreD family. In terms of assembly, ureH, UreF and UreG form a complex that acts as a GTP-hydrolysis-dependent molecular chaperone, activating the urease apoprotein by helping to assemble the nickel containing metallocenter of UreC. The UreE protein probably delivers the nickel.

Its subcellular location is the cytoplasm. Its function is as follows. Required for maturation of urease via the functional incorporation of the urease nickel metallocenter. This chain is Urease accessory protein UreH, found in Helicobacter pylori (strain P12).